Consider the following 275-residue polypeptide: Vitamin B12-binding protein (275 aa).

An N-terminal signal peptide occupies residues 1–27 (MKWIKSTGSIGLSLLLFLSSFSHSLYA). In terms of domain architecture, Fe/B12 periplasmic-binding spans 31–275 (RVISLSPSTT…LCQQLNDNGS (245 aa)). Tyrosine 58 is a cyanocob(III)alamin binding site. Cysteine 191 and cysteine 267 are oxidised to a cystine.

Belongs to the BtuF family. In terms of assembly, the complex is composed of two ATP-binding proteins (BtuD), two transmembrane proteins (BtuC) and a solute-binding protein (BtuF).

Its subcellular location is the periplasm. Functionally, part of the ABC transporter complex BtuCDF involved in vitamin B12 import. Binds vitamin B12 and delivers it to the periplasmic surface of BtuC. This is Vitamin B12-binding protein from Photorhabdus laumondii subsp. laumondii (strain DSM 15139 / CIP 105565 / TT01) (Photorhabdus luminescens subsp. laumondii).